A 125-amino-acid polypeptide reads, in one-letter code: Small ribosomal subunit protein uS13 (125 aa).

A disordered region spans residues 95–125; it reads GLPLRGQRTKTNARTRKGKRKTVANKKIASK.

The protein belongs to the universal ribosomal protein uS13 family. Part of the 30S ribosomal subunit. Forms a loose heterodimer with protein S19. Forms two bridges to the 50S subunit in the 70S ribosome.

Located at the top of the head of the 30S subunit, it contacts several helices of the 16S rRNA. In the 70S ribosome it contacts the 23S rRNA (bridge B1a) and protein L5 of the 50S subunit (bridge B1b), connecting the 2 subunits; these bridges are implicated in subunit movement. Contacts the tRNAs in the A and P-sites. This chain is Small ribosomal subunit protein uS13, found in Borreliella burgdorferi (strain ATCC 35210 / DSM 4680 / CIP 102532 / B31) (Borrelia burgdorferi).